We begin with the raw amino-acid sequence, 452 residues long: Tubulin alpha-1 chain (452 aa).

Q11 is a GTP binding site. K40 carries the N6-acetyllysine modification. Residues E71, S140, G144, T145, T179, N206, and N228 each contribute to the GTP site. A Mg(2+)-binding site is contributed by E71. Residue E254 is part of the active site. Positions 433-452 (EEVGVDSADAEGEEEEGDEY) are disordered.

The protein belongs to the tubulin family. In terms of assembly, dimer of alpha and beta chains. A typical microtubule is a hollow water-filled tube with an outer diameter of 25 nm and an inner diameter of 15 nM. Alpha-beta heterodimers associate head-to-tail to form protofilaments running lengthwise along the microtubule wall with the beta-tubulin subunit facing the microtubule plus end conferring a structural polarity. Microtubules usually have 13 protofilaments but different protofilament numbers can be found in some organisms and specialized cells. Mg(2+) is required as a cofactor. Post-translationally, undergoes a tyrosination/detyrosination cycle, the cyclic removal and re-addition of a C-terminal tyrosine residue by the enzymes tubulin tyrosine carboxypeptidase (TTCP) and tubulin tyrosine ligase (TTL), respectively. In terms of processing, acetylation of alpha chains at Lys-40 stabilizes microtubules and affects affinity and processivity of microtubule motors. This modification has a role in multiple cellular functions, ranging from cell motility, cell cycle progression or cell differentiation to intracellular trafficking and signaling.

Its subcellular location is the cytoplasm. The protein localises to the cytoskeleton. It catalyses the reaction GTP + H2O = GDP + phosphate + H(+). Its function is as follows. Tubulin is the major constituent of microtubules, a cylinder consisting of laterally associated linear protofilaments composed of alpha- and beta-tubulin heterodimers. Microtubules grow by the addition of GTP-tubulin dimers to the microtubule end, where a stabilizing cap forms. Below the cap, tubulin dimers are in GDP-bound state, owing to GTPase activity of alpha-tubulin. The sequence is that of Tubulin alpha-1 chain from Paracentrotus lividus (Common sea urchin).